The primary structure comprises 464 residues: Argininosuccinate lyase (464 aa).

The protein belongs to the lyase 1 family. Argininosuccinate lyase subfamily.

It localises to the cytoplasm. The enzyme catalyses 2-(N(omega)-L-arginino)succinate = fumarate + L-arginine. Its pathway is amino-acid biosynthesis; L-arginine biosynthesis; L-arginine from L-ornithine and carbamoyl phosphate: step 3/3. The protein is Argininosuccinate lyase of Alcanivorax borkumensis (strain ATCC 700651 / DSM 11573 / NCIMB 13689 / SK2).